We begin with the raw amino-acid sequence, 244 residues long: Small ribosomal subunit protein eS4 (244 aa).

An S4 RNA-binding domain is found at 43–106 (LPLLLVVRDI…DENYLVLFDE (64 aa)).

The protein belongs to the eukaryotic ribosomal protein eS4 family.

The polypeptide is Small ribosomal subunit protein eS4 (Methanococcus maripaludis (strain C6 / ATCC BAA-1332)).